The chain runs to 447 residues: GTPase Der (447 aa).

EngA-type G domains follow at residues 3–167 (PVIA…VQER) and 181–354 (VKIA…AAAM). Residues 9-16 (GRPNVGKS), 56-60 (DTGGF), 119-122 (NKAE), 187-194 (GRPNVGKS), 234-238 (DTAGL), and 299-302 (NKWD) contribute to the GTP site. Residues 355 to 439 (VKLPTPQLTR…PLRIEFRTNK (85 aa)) form the KH-like domain.

The protein belongs to the TRAFAC class TrmE-Era-EngA-EngB-Septin-like GTPase superfamily. EngA (Der) GTPase family. Associates with the 50S ribosomal subunit.

In terms of biological role, GTPase that plays an essential role in the late steps of ribosome biogenesis. The protein is GTPase Der of Cupriavidus pinatubonensis (strain JMP 134 / LMG 1197) (Cupriavidus necator (strain JMP 134)).